The primary structure comprises 186 residues: Putative inactive recombination-promoting nuclease-like protein YjiQ (186 aa).

This sequence belongs to the Rpn/YhgA-like nuclease family.

Functionally, this pseudogene is the C-terminal fragment of low activity DNA endonuclease RpnD which probably yields 3'-hydroxyl ends. The intact protein can be seen in this entry (AC B7NGZ6). Expression of the repaired protein increases the frequency of recA-independent recombination, but also decreases viability probably via DNA damage; in a RecA strain expression has no effect on viability but does induce the SOS repair response. May play a role in horizontal gene transfer. This Escherichia coli (strain K12) protein is Putative inactive recombination-promoting nuclease-like protein YjiQ (yjiQ).